A 533-amino-acid polypeptide reads, in one-letter code: Na(+)/H(+) antiporter NhaB (533 aa).

The next 11 helical transmembrane spans lie at 10-30, 67-87, 98-118, 131-165, 209-229, 247-267, 310-330, 355-375, 396-416, 454-474, and 481-501; these read IGNFLGNSPKWYKIAILSFLI, PGGLLAIEAVAIGMTSASQVL, LLLVFMVAGIYFMKQLLLFVF, VSLLFCLASAFLSAFLDALTVIAVIITVAVGFYSI, LLMHAGVGTALGGVCTMVGEP, IRMSPVTVPVLFAGILTCFIV, AFVGVWLIAGLALHLASVGLI, EEALPFTALLAVFFAVVAVII, LVIFYIANGLLSMVSDNVFVG, ATPNGQAAFLFLLTSALAPLI, and MVWMALPYTIVLSIVGVMAIQ.

Belongs to the NhaB Na(+)/H(+) (TC 2.A.34) antiporter family.

The protein resides in the cell inner membrane. The enzyme catalyses 2 Na(+)(in) + 3 H(+)(out) = 2 Na(+)(out) + 3 H(+)(in). In terms of biological role, na(+)/H(+) antiporter that extrudes sodium in exchange for external protons. In Shewanella sp. (strain ANA-3), this protein is Na(+)/H(+) antiporter NhaB.